The sequence spans 178 residues: Small ribosomal subunit protein uS4 (178 aa).

The S4 RNA-binding domain maps to 104–166 (RRLQTIVYRK…PNSPMASENH (63 aa)). Positions 158–178 (NSPMASENHPERTAAVSEENQ) are disordered.

Belongs to the universal ribosomal protein uS4 family. As to quaternary structure, part of the 30S ribosomal subunit. Contacts protein S5. The interaction surface between S4 and S5 is involved in control of translational fidelity.

Its function is as follows. One of the primary rRNA binding proteins, it binds directly to 16S rRNA where it nucleates assembly of the body of the 30S subunit. Functionally, with S5 and S12 plays an important role in translational accuracy. This chain is Small ribosomal subunit protein uS4, found in Methanococcus maripaludis (strain C5 / ATCC BAA-1333).